A 513-amino-acid polypeptide reads, in one-letter code: ATP synthase subunit alpha (513 aa).

Residue 169 to 176 (GDRQTGKT) coordinates ATP.

Belongs to the ATPase alpha/beta chains family. F-type ATPases have 2 components, CF(1) - the catalytic core - and CF(0) - the membrane proton channel. CF(1) has five subunits: alpha(3), beta(3), gamma(1), delta(1), epsilon(1). CF(0) has three main subunits: a(1), b(2) and c(9-12). The alpha and beta chains form an alternating ring which encloses part of the gamma chain. CF(1) is attached to CF(0) by a central stalk formed by the gamma and epsilon chains, while a peripheral stalk is formed by the delta and b chains.

It is found in the cell inner membrane. It catalyses the reaction ATP + H2O + 4 H(+)(in) = ADP + phosphate + 5 H(+)(out). Produces ATP from ADP in the presence of a proton gradient across the membrane. The alpha chain is a regulatory subunit. The sequence is that of ATP synthase subunit alpha from Shewanella sp. (strain ANA-3).